Here is a 563-residue protein sequence, read N- to C-terminus: Light-independent protochlorophyllide reductase subunit B (563 aa).

A [4Fe-4S] cluster-binding site is contributed by D36. D293 serves as the catalytic Proton donor. 437–438 (GM) is a substrate binding site. Residues 459-478 (ERREAEFGNQKVETGEPGTG) form a disordered region.

Belongs to the ChlB/BchB/BchZ family. As to quaternary structure, protochlorophyllide reductase is composed of three subunits; BchL, BchN and BchB. Forms a heterotetramer of two BchB and two BchN subunits. [4Fe-4S] cluster serves as cofactor.

It carries out the reaction chlorophyllide a + oxidized 2[4Fe-4S]-[ferredoxin] + 2 ADP + 2 phosphate = protochlorophyllide a + reduced 2[4Fe-4S]-[ferredoxin] + 2 ATP + 2 H2O. It functions in the pathway porphyrin-containing compound metabolism; bacteriochlorophyll biosynthesis (light-independent). Its function is as follows. Component of the dark-operative protochlorophyllide reductase (DPOR) that uses Mg-ATP and reduced ferredoxin to reduce ring D of protochlorophyllide (Pchlide) to form chlorophyllide a (Chlide). This reaction is light-independent. The NB-protein (BchN-BchB) is the catalytic component of the complex. The sequence is that of Light-independent protochlorophyllide reductase subunit B from Roseiflexus castenholzii (strain DSM 13941 / HLO8).